A 452-amino-acid polypeptide reads, in one-letter code: Bifunctional protein GlmU (452 aa).

Positions 1–226 (MNFSAVILAA…PIEVEGVNDR (226 aa)) are pyrophosphorylase. UDP-N-acetyl-alpha-D-glucosamine is bound by residues 8–11 (LAAG), Lys-22, Gln-73, 78–79 (GT), 100–102 (YGD), Gly-137, Glu-151, Asn-166, and Asn-224. Asp-102 is a Mg(2+) binding site. Asn-224 provides a ligand contact to Mg(2+). The segment at 227 to 247 (AQLARLERAYQAAQAQKLLEQ) is linker. The tract at residues 248 to 452 (GVMLRDPSRF…IANWQRPTKK (205 aa)) is N-acetyltransferase. Positions 330 and 348 each coordinate UDP-N-acetyl-alpha-D-glucosamine. The active-site Proton acceptor is His-360. 2 residues coordinate UDP-N-acetyl-alpha-D-glucosamine: Tyr-363 and Asn-374. Residues Ala-377, 383 to 384 (NY), Ser-402, Ala-420, and Arg-437 contribute to the acetyl-CoA site.

The protein in the N-terminal section; belongs to the N-acetylglucosamine-1-phosphate uridyltransferase family. This sequence in the C-terminal section; belongs to the transferase hexapeptide repeat family. As to quaternary structure, homotrimer. Mg(2+) is required as a cofactor.

It localises to the cytoplasm. The enzyme catalyses alpha-D-glucosamine 1-phosphate + acetyl-CoA = N-acetyl-alpha-D-glucosamine 1-phosphate + CoA + H(+). The catalysed reaction is N-acetyl-alpha-D-glucosamine 1-phosphate + UTP + H(+) = UDP-N-acetyl-alpha-D-glucosamine + diphosphate. It functions in the pathway nucleotide-sugar biosynthesis; UDP-N-acetyl-alpha-D-glucosamine biosynthesis; N-acetyl-alpha-D-glucosamine 1-phosphate from alpha-D-glucosamine 6-phosphate (route II): step 2/2. Its pathway is nucleotide-sugar biosynthesis; UDP-N-acetyl-alpha-D-glucosamine biosynthesis; UDP-N-acetyl-alpha-D-glucosamine from N-acetyl-alpha-D-glucosamine 1-phosphate: step 1/1. It participates in bacterial outer membrane biogenesis; LPS lipid A biosynthesis. Functionally, catalyzes the last two sequential reactions in the de novo biosynthetic pathway for UDP-N-acetylglucosamine (UDP-GlcNAc). The C-terminal domain catalyzes the transfer of acetyl group from acetyl coenzyme A to glucosamine-1-phosphate (GlcN-1-P) to produce N-acetylglucosamine-1-phosphate (GlcNAc-1-P), which is converted into UDP-GlcNAc by the transfer of uridine 5-monophosphate (from uridine 5-triphosphate), a reaction catalyzed by the N-terminal domain. This is Bifunctional protein GlmU from Aliivibrio fischeri (strain ATCC 700601 / ES114) (Vibrio fischeri).